Reading from the N-terminus, the 112-residue chain is Keratin-associated protein 12-4 (112 aa).

Repeat copies occupy residues 10–14 (CPMAC), 20–24 (CVPST), 25–29 (CYPPE), 35–39 (CCCSA), 41–45 (CVALL), 46–50 (CRPLC), 56–60 (CQPAC), 61–65 (CVPSP), 66–70 (CQVAC), 71–75 (CVPVS), 76–80 (CKPVL), 81–85 (CVASF), 86–90 (CPTSG), 91–95 (CCQPF), and 96–100 (CPTLV). Residues 10-100 (CPMACPGSPC…CCQPFCPTLV (91 aa)) form a 15 X 5 AA approximate repeats region.

Belongs to the KRTAP type 12 family. In terms of assembly, interacts with hair keratins. As to expression, restricted to a narrow region of the hair fiber cuticle, lying approximately 20 cell layers above the apex of the dermal papilla of the hair root; not detected in any other tissues.

In the hair cortex, hair keratin intermediate filaments are embedded in an interfilamentous matrix, consisting of hair keratin-associated proteins (KRTAP), which are essential for the formation of a rigid and resistant hair shaft through their extensive disulfide bond cross-linking with abundant cysteine residues of hair keratins. The matrix proteins include the high-sulfur and high-glycine-tyrosine keratins. The chain is Keratin-associated protein 12-4 (KRTAP12-4) from Homo sapiens (Human).